The primary structure comprises 260 residues: Putative ABC transporter ATP-binding protein PF0068 (260 aa).

Positions 2-234 constitute an ABC transporter domain; the sequence is IEVKGVWFWY…DLKRYKLEEP (233 aa). An ATP-binding site is contributed by 34–41; that stretch reads GPNGSGKT.

Belongs to the ABC transporter superfamily.

It localises to the cell membrane. Its function is as follows. Probably part of an ABC transporter complex. Responsible for energy coupling to the transport system. The sequence is that of Putative ABC transporter ATP-binding protein PF0068 from Pyrococcus furiosus (strain ATCC 43587 / DSM 3638 / JCM 8422 / Vc1).